A 274-amino-acid polypeptide reads, in one-letter code: Rhamnulose-1-phosphate aldolase (274 aa).

Residue E117 is part of the active site. Zn(2+) is bound by residues H141, H143, and H212.

The protein belongs to the aldolase class II family. RhaD subfamily. As to quaternary structure, homotetramer. Zn(2+) serves as cofactor.

It localises to the cytoplasm. The enzyme catalyses L-rhamnulose 1-phosphate = (S)-lactaldehyde + dihydroxyacetone phosphate. The protein operates within carbohydrate degradation; L-rhamnose degradation; glycerone phosphate from L-rhamnose: step 3/3. In terms of biological role, catalyzes the reversible cleavage of L-rhamnulose-1-phosphate to dihydroxyacetone phosphate (DHAP) and L-lactaldehyde. The sequence is that of Rhamnulose-1-phosphate aldolase from Escherichia coli O6:H1 (strain CFT073 / ATCC 700928 / UPEC).